A 250-amino-acid chain; its full sequence is Bacteriorhodopsin-II (250 aa).

Helical transmembrane passes span 14 to 34, 49 to 69, 89 to 109, 114 to 134, 142 to 162, 183 to 203, and 210 to 230; these read EGIW…YFMA, VITI…FFGF, YADW…LAGA, MASL…ATLM, AFWT…VVVV, IILV…EGLG, and ETLL…FILL. Residue lysine 222 is modified to N6-(retinylidene)lysine.

Belongs to the archaeal/bacterial/fungal opsin family. Post-translationally, the covalent binding of retinal to the apoprotein, bacterioopsin, generates bacteriorhodopsin.

It localises to the membrane. Its function is as follows. Light-driven proton pump. This Haloarcula marismortui (strain ATCC 43049 / DSM 3752 / JCM 8966 / VKM B-1809) (Halobacterium marismortui) protein is Bacteriorhodopsin-II (xop1).